The sequence spans 580 residues: Alpha-thujene synthase, chloroplastic (580 aa).

The transit peptide at 1–32 (MALQLLTPSFSFQHSPSPHKLTTLRYTHHRIR) directs the protein to the chloroplast. (2E)-geranyl diphosphate contacts are provided by Arg296, Asp333, Asp337, Arg473, and Asp476. Asp333 and Asp337 together coordinate Mg(2+). A DDXXD motif motif is present at residues 333-337 (DDVYD). Asp476, Thr480, and Glu484 together coordinate Mg(2+).

The protein belongs to the terpene synthase family. Tpsb subfamily. Monomer. It depends on Mg(2+) as a cofactor. Requires Mn(2+) as cofactor. As to expression, expressed in developing and mature fruits. Barely detectable in leaves and shoots.

It localises to the plastid. The protein localises to the chloroplast. It carries out the reaction (2E)-geranyl diphosphate = alpha-thujene + diphosphate. The protein operates within secondary metabolite biosynthesis; terpenoid biosynthesis. Functionally, monoterpene synthase (TPS) involved in the biosynthesis of monoterpene natural products used by traditional Chinese medicine to treat headache, inflammation and intoxication. Catalyzes the conversion of (2E)-geranyl diphosphate (GPP) into alpha-thujene. The sequence is that of Alpha-thujene synthase, chloroplastic from Litsea cubeba (Aromatic litsea).